A 454-amino-acid polypeptide reads, in one-letter code: Tubulin alpha chain (454 aa).

8 residues coordinate GTP: Q12, D72, S141, G145, T146, T180, N207, and N229. Residue D72 participates in Mg(2+) binding. E255 is a catalytic residue.

This sequence belongs to the tubulin family. Dimer of alpha and beta chains. A typical microtubule is a hollow water-filled tube with an outer diameter of 25 nm and an inner diameter of 15 nM. Alpha-beta heterodimers associate head-to-tail to form protofilaments running lengthwise along the microtubule wall with the beta-tubulin subunit facing the microtubule plus end conferring a structural polarity. Microtubules usually have 13 protofilaments but different protofilament numbers can be found in some organisms and specialized cells. Mg(2+) is required as a cofactor.

The protein resides in the cytoplasm. It is found in the cytoskeleton. The enzyme catalyses GTP + H2O = GDP + phosphate + H(+). Functionally, tubulin is the major constituent of microtubules, a cylinder consisting of laterally associated linear protofilaments composed of alpha- and beta-tubulin heterodimers. Microtubules grow by the addition of GTP-tubulin dimers to the microtubule end, where a stabilizing cap forms. Below the cap, tubulin dimers are in GDP-bound state, owing to GTPase activity of alpha-tubulin. In Colletotrichum orbiculare (strain 104-T / ATCC 96160 / CBS 514.97 / LARS 414 / MAFF 240422) (Cucumber anthracnose fungus), this protein is Tubulin alpha chain (TUB1).